Here is a 178-residue protein sequence, read N- to C-terminus: Large ribosomal subunit protein bL25 (178 aa).

This sequence belongs to the bacterial ribosomal protein bL25 family. CTC subfamily. Part of the 50S ribosomal subunit; part of the 5S rRNA/L5/L18/L25 subcomplex. Contacts the 5S rRNA. Binds to the 5S rRNA independently of L5 and L18.

Its function is as follows. This is one of the proteins that binds to the 5S RNA in the ribosome where it forms part of the central protuberance. This chain is Large ribosomal subunit protein bL25, found in Helicobacter pylori (strain G27).